The primary structure comprises 562 residues: Potassium-transporting ATPase potassium-binding subunit (562 aa).

12 consecutive transmembrane segments (helical) span residues 6 to 26 (FLLI…LGGF), 63 to 83 (ALAI…LLMA), 132 to 152 (GLTV…FALI), 175 to 195 (LYVL…QGVL), 253 to 273 (FVQM…FGQV), 283 to 303 (LIWA…YAEL), 327 to 347 (FGIL…CGAV), 356 to 376 (ALGG…FGGV), 379 to 399 (GLYG…LMIG), 416 to 436 (MTAL…ALAL), 483 to 503 (LLLA…VLAI), and 526 to 546 (LFIG…FIPA).

The protein belongs to the KdpA family. As to quaternary structure, the system is composed of three essential subunits: KdpA, KdpB and KdpC.

It is found in the cell inner membrane. In terms of biological role, part of the high-affinity ATP-driven potassium transport (or Kdp) system, which catalyzes the hydrolysis of ATP coupled with the electrogenic transport of potassium into the cytoplasm. This subunit binds the periplasmic potassium ions and delivers the ions to the membrane domain of KdpB through an intramembrane tunnel. This chain is Potassium-transporting ATPase potassium-binding subunit, found in Yersinia pseudotuberculosis serotype O:1b (strain IP 31758).